We begin with the raw amino-acid sequence, 296 residues long: Light-independent protochlorophyllide reductase iron-sulfur ATP-binding protein (296 aa).

ATP is bound by residues 39–44 and Lys-68; that span reads GIGKST. Ser-43 is a Mg(2+) binding site. Residues Cys-124 and Cys-158 each contribute to the [4Fe-4S] cluster site. 209-210 provides a ligand contact to ATP; the sequence is NR.

Belongs to the NifH/BchL/ChlL family. As to quaternary structure, homodimer. Protochlorophyllide reductase is composed of three subunits; ChlL, ChlN and ChlB. It depends on [4Fe-4S] cluster as a cofactor.

It catalyses the reaction chlorophyllide a + oxidized 2[4Fe-4S]-[ferredoxin] + 2 ADP + 2 phosphate = protochlorophyllide a + reduced 2[4Fe-4S]-[ferredoxin] + 2 ATP + 2 H2O. It participates in porphyrin-containing compound metabolism; chlorophyll biosynthesis (light-independent). Component of the dark-operative protochlorophyllide reductase (DPOR) that uses Mg-ATP and reduced ferredoxin to reduce ring D of protochlorophyllide (Pchlide) to form chlorophyllide a (Chlide). This reaction is light-independent. The L component serves as a unique electron donor to the NB-component of the complex, and binds Mg-ATP. This chain is Light-independent protochlorophyllide reductase iron-sulfur ATP-binding protein, found in Prochlorococcus marinus (strain MIT 9303).